The primary structure comprises 299 residues: Oxygen-dependent coproporphyrinogen-III oxidase (299 aa).

Position 92 (serine 92) interacts with substrate. Residues histidine 96 and histidine 106 each contribute to the a divalent metal cation site. Histidine 106 acts as the Proton donor in catalysis. Residue 108–110 (NVR) coordinates substrate. The a divalent metal cation site is built by histidine 145 and histidine 175. The interval 240–275 (YVEFNLVWDRGTLFGLQTGGRTESILMSMPPLVRWE) is important for dimerization. Position 258–260 (258–260 (GGR)) interacts with substrate.

It belongs to the aerobic coproporphyrinogen-III oxidase family. Homodimer. A divalent metal cation is required as a cofactor.

The protein resides in the cytoplasm. The catalysed reaction is coproporphyrinogen III + O2 + 2 H(+) = protoporphyrinogen IX + 2 CO2 + 2 H2O. Its pathway is porphyrin-containing compound metabolism; protoporphyrin-IX biosynthesis; protoporphyrinogen-IX from coproporphyrinogen-III (O2 route): step 1/1. Its function is as follows. Involved in the heme biosynthesis. Catalyzes the aerobic oxidative decarboxylation of propionate groups of rings A and B of coproporphyrinogen-III to yield the vinyl groups in protoporphyrinogen-IX. The protein is Oxygen-dependent coproporphyrinogen-III oxidase of Salmonella paratyphi B (strain ATCC BAA-1250 / SPB7).